The primary structure comprises 430 residues: Enolase (430 aa).

Gln165 lines the (2R)-2-phosphoglycerate pocket. The active-site Proton donor is Glu207. Positions 244, 287, and 314 each coordinate Mg(2+). Positions 339, 368, 369, and 390 each coordinate (2R)-2-phosphoglycerate. The Proton acceptor role is filled by Lys339.

Belongs to the enolase family. In terms of assembly, component of the RNA degradosome, a multiprotein complex involved in RNA processing and mRNA degradation. Mg(2+) is required as a cofactor.

It is found in the cytoplasm. The protein localises to the secreted. Its subcellular location is the cell surface. The enzyme catalyses (2R)-2-phosphoglycerate = phosphoenolpyruvate + H2O. It functions in the pathway carbohydrate degradation; glycolysis; pyruvate from D-glyceraldehyde 3-phosphate: step 4/5. Catalyzes the reversible conversion of 2-phosphoglycerate (2-PG) into phosphoenolpyruvate (PEP). It is essential for the degradation of carbohydrates via glycolysis. In Xylella fastidiosa (strain M23), this protein is Enolase.